Here is a 51-residue protein sequence, read N- to C-terminus: Large ribosomal subunit protein eL39 (51 aa).

This sequence belongs to the eukaryotic ribosomal protein eL39 family.

This is Large ribosomal subunit protein eL39 from Methanopyrus kandleri (strain AV19 / DSM 6324 / JCM 9639 / NBRC 100938).